The following is a 350-amino-acid chain: MVPMTIKVAVAGASGYAGGEILRLLLGHPAYASGELEIGALTAASTVGSTVAELMPHLPQLADRVIEDTTKEVLAGHDVVFLGLPHGFSAEIANQLGPEVTVIDCAADFRLTNADDWSKFYGSEHAGSWPYGIPEMPGHREQLKGATRVAVPGCFPTGATLALLPAVQADLIEPDISVVSITGVSGAGKKASVPLLGSETMGSLKAYNTSGKHRHTPELTQNLKEVTDKDVTISFTPVLAPLPRGILTTATAPLIDGVTQEQARKVYEDFYVDEPFVLVLPEGVQPQTQNVVGSNMCHVQIEVDTVARKVLVTSAIDNLTKGTGGAAVQCMNLALGFEETAGLPRTGVAP.

C154 is a catalytic residue.

The protein belongs to the NAGSA dehydrogenase family. Type 1 subfamily.

It is found in the cytoplasm. It catalyses the reaction N-acetyl-L-glutamate 5-semialdehyde + phosphate + NADP(+) = N-acetyl-L-glutamyl 5-phosphate + NADPH + H(+). Its pathway is amino-acid biosynthesis; L-arginine biosynthesis; N(2)-acetyl-L-ornithine from L-glutamate: step 3/4. Its function is as follows. Catalyzes the NADPH-dependent reduction of N-acetyl-5-glutamyl phosphate to yield N-acetyl-L-glutamate 5-semialdehyde. This chain is N-acetyl-gamma-glutamyl-phosphate reductase, found in Corynebacterium efficiens (strain DSM 44549 / YS-314 / AJ 12310 / JCM 11189 / NBRC 100395).